The primary structure comprises 81 residues: MKTLLLTLVVVTIVCLDFGHTMICYNQQSSQPPTTTTCSEGQCYKQRWRDHRGWRTERGCGCPKAIPEVKLNCCKTDRCNG.

An N-terminal signal peptide occupies residues 1 to 21 (MKTLLLTLVVVTIVCLDFGHT). Disulfide bonds link Cys-24–Cys-43, Cys-38–Cys-60, Cys-62–Cys-73, and Cys-74–Cys-79.

The protein belongs to the three-finger toxin family. Short-chain subfamily. Type I alpha-neurotoxin sub-subfamily. Expressed by the venom gland.

The protein localises to the secreted. Functionally, binds to muscle nicotinic acetylcholine receptor (nAChR) and inhibit acetylcholine from binding to the receptor, thereby impairing neuromuscular transmission. The polypeptide is Three-finger toxin MALT0057C (Micrurus altirostris (Uruguayan coral snake)).